A 461-amino-acid polypeptide reads, in one-letter code: MDHSPWQRCLSVLQEELPAQQFSMWIRPLQCVINDNVMTLYAPNRFVLDWVRDKYVNRINELLTINESNNPLLLRFDVGSKPTIDNSVTNSPVSRNTGGNESLFAKATSAPKVAEPESNIPKKTNVRLNYTFENFVEGKSNQLARAAASQVADNPGTAYNPLFIYGGTGLGKTHLLHAVGNGILLNKPNAKIAYMHSERFVQDMVRALQNNAMEKFKQYYRSVDALLIDDIQFFAGKERTQEEFFHTFNALLEGNQQVILTSDRYPKEINGVDDRLKSRFGWGLTLAIEPPELETRVAILKRKAQESQINLADEVAFFIAKRLRSNVRELEGALNRVIANANFTGRAITIDFVREALRDLLALQDKLVTIDNIQRTVAEYYKIKIADLLSKRRNRSVARPRQIAMALSKELTNHSLPEIGDAFGGRDHTTVLHACRKVKSLREETHDIKEDYSNLIRTLSS.

Residues 1–83 form a domain I, interacts with DnaA modulators region; sequence MDHSPWQRCL…LRFDVGSKPT (83 aa). Residues 83–124 are domain II; the sequence is TIDNSVTNSPVSRNTGGNESLFAKATSAPKVAEPESNIPKKT. The interval 125 to 341 is domain III, AAA+ region; the sequence is NVRLNYTFEN…GALNRVIANA (217 aa). ATP-binding residues include Gly169, Gly171, Lys172, and Thr173. A domain IV, binds dsDNA region spans residues 342-461; the sequence is NFTGRAITID…YSNLIRTLSS (120 aa).

Belongs to the DnaA family. As to quaternary structure, oligomerizes as a right-handed, spiral filament on DNA at oriC.

Its subcellular location is the cytoplasm. Functionally, plays an essential role in the initiation and regulation of chromosomal replication. ATP-DnaA binds to the origin of replication (oriC) to initiate formation of the DNA replication initiation complex once per cell cycle. Binds the DnaA box (a 9 base pair repeat at the origin) and separates the double-stranded (ds)DNA. Forms a right-handed helical filament on oriC DNA; dsDNA binds to the exterior of the filament while single-stranded (ss)DNA is stabiized in the filament's interior. The ATP-DnaA-oriC complex binds and stabilizes one strand of the AT-rich DNA unwinding element (DUE), permitting loading of DNA polymerase. After initiation quickly degrades to an ADP-DnaA complex that is not apt for DNA replication. Binds acidic phospholipids. This Colwellia psychrerythraea (strain 34H / ATCC BAA-681) (Vibrio psychroerythus) protein is Chromosomal replication initiator protein DnaA.